We begin with the raw amino-acid sequence, 760 residues long: MRTANIFTQITQINTTNDVVSFRNTTGKRVIISFTLKTQYRQFSNVTNNIRPQVLNLKEKGIENRKKLVNSQSLSFFKTTAQAIESQLNSGNLLASSQSIEEIKNISLPVDLNKNVIRFKKRKLLTAYLKQLQIKKLNAVKFTFKLKNRLLNRKTVVVSYTPKVNNTNKVNFLQQLLTFKQKVAKHYAITKISNKNQTMFLNTHGIFRNQKVFKRSKLKMLHQQKVSIKLLQKVLRFQKQRYSILKPHNKFDSILTALMADCNPKKRMKKNSLPIDINHRTEISQQQKDSDLEGLLTKYKVKTQELITKITKKQRRLKYYLILTQLRVQKDLSKGNEVEKKQEIQKKNEQKQQKSIQTQFIKKVLTGVLQKNEQQQETQKALIIKILLNILRRKGEVTGEGNMDITYPYLKEVKKKQRQLQMAYVAANIKMKLVNDFIDYKGDSRLWGIHVNLIKSRNQYLNIIETQFENEENVYQNPIYKTKLVPLRSEVEYLKKTRYMKYGVNSRNKITILNNVMESDKKLYNLRLPKQRVQVPTLLTIYKNVRECLSGTRAQGKKEEDRAIYQFVMKLEKLKRNRNRKQSKLRISKQQEIQPQKEESVKKEKVEQIPLRQGVLRITLKRRNMFLVCQNKSTKHVDTSLTARQEYYRIYNTKDFDAITQKGKKDLKATTVKPKGPIGRFISTEVFRRRVITQALLNLRAQIKYNVLDIEIRNPTSNPLIKTILYKNWYVYKNQGLLRMYKFTKNKAHGSMRQKKARRL.

Residues 578 to 587 (RNRKQSKLRI) show a composition bias toward basic residues. Residues 578–604 (RNRKQSKLRISKQQEIQPQKEESVKKE) are disordered. The span at 595–604 (PQKEESVKKE) shows a compositional bias: basic and acidic residues.

It localises to the mitochondrion. This is an uncharacterized protein from Dictyostelium citrinum (Slime mold).